A 694-amino-acid polypeptide reads, in one-letter code: Nuclear factor erythroid 2-related factor 3 (694 aa).

Residues 133-150 show a composition bias toward low complexity; it reads ASSTGGAGASVDGGSQAV. 2 disordered regions span residues 133-256 and 330-357; these read ASST…LNGT and DPTA…QTLP. Composition is skewed to basic and acidic residues over residues 193 to 217 and 231 to 254; these read GVLR…RVSA and NKIA…RHLN. A compositionally biased stretch (polar residues) spans 333 to 357; sequence ARTSQSQEPFLQLNSHTTNPEQTLP. Residues 578–641 enclose the bZIP domain; that stretch reads LIRDIRRRGK…NIMKQKLHDL (64 aa). The interval 580–599 is basic motif; it reads RDIRRRGKNKVAAQNCRKRK. Positions 606-620 are leucine-zipper; the sequence is LEDDVCNLQAKKETL.

Belongs to the bZIP family. CNC subfamily. As to quaternary structure, heterodimer with MAFG, MAFK and other small MAF proteins that binds to the MAF recognition elements (MARE). Highly expressed in human placenta and also in B-cell and monocyte cell lines. Low expression in heart, brain, lung, skeletal muscle, kidney and pancreas.

The protein localises to the nucleus. Its function is as follows. Activates erythroid-specific, globin gene expression. The polypeptide is Nuclear factor erythroid 2-related factor 3 (NFE2L3) (Homo sapiens (Human)).